The chain runs to 941 residues: MNKKKKPFLGMPAPLGYVPGLGRGATGFTTRSDIGPARDANDPVDDRHAPPGKRTVGDQMKKNQAADDDDEDLNDTNYDEFNGYAGSLFSSGPYEKDDEEADAIYAALDKRMDERRKERREQREKEEIEKYRMERPKIQQQFSDLKRKLAEVTEEEWLSIPEVGDARNKRQRNPRYEKLTPVPDSFFAKHLQTGENHTSVDPRQTQFGGLNTPYPGGLNTPYPGGMTPGLMTPGTGELDMRKIGQARNTLMDMRLSQVSDSVSGQTVVDPKGYLTDLNSMIPTHGGDINDIKKARLLLKSVRETNPHHPPAWIASARLEEVTGKLQVARNLIMKGTEMCPKSEDVWLEAARLQPGDTAKAVVAQAVRHLPQSVRIYIRAAELETDIRAKKRVLRKALEHVPNSVRLWKAAVELEEPEDARIMLSRAVECCPTSVELWLALARLETYENARKVLNKARENIPTDRHIWITAAKLEEANGNTQMVEKIIDRAITSLRANGVEINREQWIQDAEECDRAGSVATCQAVMRAVIGIGIEEEDRKHTWMEDADSCVAHNALECARAIYAYALQVFPSKKSVWLRAAYFEKNHGTRESLEALLQRAVAHCPKAEVLWLMGAKSKWLAGDVPAARSILALAFQANPNSEEIWLAAVKLESENDEYERARRLLAKARSSAPTARVFMKSVKLEWVQDNIRAAQDLCEEALRHYEDFPKLWMMKGQIEEQKEMMEKAREAYNQGLKKCPHSTPLWLLLSRLEEKIGQLTRARAILEKSRLKNPKNPGLWLESVRLEYRAGLKNIANTLMAKALQECPNSGILWSEAIFLEARPQRRTKSVDALKKCEHDPHVLLAVAKLFWSQRKITKAREWFHRTVKIDSDLGDAWAFFYKFELQHGTEEQQEEVRKRCESAEPRHGELWCAVSKDIANWQKKIGDILRLVAGRIKNTF.

The segment at Met-1 to Asp-79 is disordered. The span at Asp-39 to Ala-65 shows a compositional bias: basic and acidic residues. Residues Ala-66 to Tyr-78 show a composition bias toward acidic residues. Ser-143 is modified (phosphoserine). A phosphothreonine mark is found at Thr-180, Thr-266, and Thr-275. Residue Ser-279 is modified to Phosphoserine. HAT repeat units lie at residues Thr-384–Pro-416, Asp-418–Glu-444, Thr-445–Ala-476, Asn-554–Asn-586, Gly-588–Leu-620, Gly-622–Glu-654, Asp-689–Gln-721, Glu-723–Lys-755, and Arg-855–Gln-887.

In terms of assembly, identified in the spliceosome B complex. Identified in the spliceosome C complex. Associates with the U5 snRNP particle. Component of the U4/U6-U5 tri-snRNP complex composed of the U4, U6 and U5 snRNAs and at least PRPF3, PRPF4, PRPF6, PRPF8, PRPF31, SNRNP200, TXNL4A, SNRNP40, DDX23, CD2BP2, PPIH, SNU13, EFTUD2, SART1 and USP39, LSm proteins LSm2-8 and Sm proteins. Interacts with ARAF. Interacts with AR and NR3C1, but not ESR1, independently of the presence of hormones. Interacts with USH1G. Post-translationally, phosphorylated by PRP4K during spliceosome assembly. Widely expressed.

Its subcellular location is the nucleus. It localises to the nucleoplasm. The protein localises to the nucleus speckle. Its function is as follows. Involved in pre-mRNA splicing as component of the U4/U6-U5 tri-snRNP complex, one of the building blocks of the spliceosome. Enhances dihydrotestosterone-induced transactivation activity of AR, as well as dexamethasone-induced transactivation activity of NR3C1, but does not affect estrogen-induced transactivation. This chain is Pre-mRNA-processing factor 6, found in Homo sapiens (Human).